The chain runs to 252 residues: Probable transcriptional regulatory protein HNE_0161 (252 aa).

It belongs to the TACO1 family.

It localises to the cytoplasm. The chain is Probable transcriptional regulatory protein HNE_0161 from Hyphomonas neptunium (strain ATCC 15444).